A 249-amino-acid chain; its full sequence is Thioesterase TesA (249 aa).

Residues Ser92, Asp196, and His224 contribute to the active site.

Belongs to the thioesterase family.

It carries out the reaction a fatty acyl-CoA + H2O = a fatty acid + CoA + H(+). Functionally, involved in the synthesis of both phthiocerol dimycocerosates (PDIMs) and phenolic glycolipids (PGLs), which are structurally related lipids non-covalently bound to the outer cell wall layer of M.tuberculosis and are important virulence factors. The polypeptide is Thioesterase TesA (Mycobacterium marinum (strain ATCC BAA-535 / M)).